We begin with the raw amino-acid sequence, 1063 residues long: Structural polyprotein (1063 aa).

The segment at 1-131 (MASTTPITME…LGPPTNPFQA (131 aa)) is disordered. A human C1QBP/SF2P32-binding region spans residues 30 to 69 (GASQSRRPRPPRQRDSSTSGDDSGRDSGGPRRRRGNRGRG). S46 carries the post-translational modification Phosphoserine; by host. Over residues 70 to 87 (QLRDWSRAPPPPEERQES) the composition is skewed to basic and acidic residues. Positions 93 to 107 (APKPSRAPPQQPQPP) are enriched in pro residues. A disulfide bridge connects residues C153 and C197. The functions as E2 signal peptide stretch occupies residues 279–300 (GAPQAFLAGLLLAAVAVGTARA). Over 301–534 (GLQPRADMAA…LWLATANALS (234 aa)) the chain is Extracellular. 4 N-linked (GlcNAc...) asparagine; by host glycosylation sites follow: N353, N371, N410, and N429. The helical transmembrane segment at 535-555 (LDHALAAFVLLVPWVLIFMVC) threads the bilayer. At 556–582 (RRACRRRGAAAALTAVVLQGYNPPAYG) the chain is on the cytoplasmic side. Positions 563-582 (GAAAALTAVVLQGYNPPAYG) are functions as E1 signal peptide. Residues 583–1028 (EEAFTYLCTA…QTWAEWAAAH (446 aa)) lie on the Extracellular side of the membrane. 8 disulfide bridges follow: C590–C595, C619–C824, C641–C653, C699–C712, C758–C767, C807–C817, C931–C934, and C950–C983. A glycan (N-linked (GlcNAc...) asparagine; by host) is linked at N658. Residues N670 and A671 each contribute to the Ca(2+) site. Ca(2+) is bound by residues D718 and T719. N-linked (GlcNAc...) asparagine; by host glycosylation is found at N759 and N791. 2 O-linked (GalNAc...) threonine; by host glycosylation sites follow: T1011 and T1012. A helical membrane pass occupies residues 1029–1049 (WWQLTLGAICALLLAGLLACC). The Extracellular segment spans residues 1050–1063 (AKCLYYLRGAIAPR).

Homodimer; further assembles into homooligomer. Interacts with human C1QBP. Interacts (via N-terminus) with protease/methyltransferase p150. As to quaternary structure, heterodimer with spike glycoprotein E2. In terms of assembly, heterodimer with spike glycoprotein E1. Structural polyprotein: Specific enzymatic cleavages in vivo yield mature proteins. Two signal peptidase-mediated cleavages within the polyprotein produce the structural proteins capsid, E2, and E1. The E2 signal peptide remains attached to the C-terminus of the capsid protein after cleavage by the signal peptidase. Another signal peptide at E2 C-terminus directs E1 to the ER, with a similar mechanism. Post-translationally, contains three N-linked oligosaccharides. In terms of processing, capsid is phosphorylated on Ser-46 by host. This phosphorylation negatively regulates capsid protein RNA-binding activity. Dephosphorylated by human PP1A.

Its subcellular location is the virion. It is found in the host cytoplasm. The protein localises to the host mitochondrion. It localises to the virion membrane. The protein resides in the host Golgi apparatus membrane. In terms of biological role, capsid protein interacts with genomic RNA and assembles into icosahedric core particles 65-70 nm in diameter. The resulting nucleocapsid eventually associates with the cytoplasmic domain of E2 at the cell membrane, leading to budding and formation of mature virions from host Golgi membranes. Phosphorylation negatively regulates RNA-binding activity, possibly delaying virion assembly during the viral replication phase. Capsid protein dimerizes and becomes disulfide-linked in the virion. Modulates genomic RNA replication. Modulates subgenomic RNA synthesis by interacting with human C1QBP/SF2P32. Induces both perinuclear clustering of mitochondria and the formation of electron-dense intermitochondrial plaques, both hallmarks of rubella virus infected cells. Induces apoptosis when expressed in transfected cells. Functionally, responsible for viral attachment to target host cell, by binding to the cell receptor. Its transport to the plasma membrane depends on interaction with E1 protein. The surface glycoproteins display an irregular helical organization and a pseudo-tetrameric inner nucleocapsid arrangement. Its function is as follows. Class II viral fusion protein. Fusion activity is inactive as long as E1 is bound to E2 in mature virion. After virus attachment to target cell and clathrin-mediated endocytosis, acidification of the endosome would induce dissociation of E1/E2 heterodimer and concomitant trimerization of the E1 subunits. This E1 homotrimer is fusion active, and promotes release of viral nucleocapsid in cytoplasm after endosome and viral membrane fusion. The cytoplasmic tail of spike glycoprotein E1 modulates virus release. The surface glycoproteins display an irregular helical organization and a pseudo-tetrameric inner nucleocapsid arrangement. This Homo sapiens (Human) protein is Structural polyprotein.